Here is a 101-residue protein sequence, read N- to C-terminus: Phosphoribosyl-AMP cyclohydrolase (101 aa).

Aspartate 71 is a binding site for Mg(2+). Cysteine 72 is a Zn(2+) binding site. Mg(2+) contacts are provided by aspartate 73 and aspartate 75. Zn(2+) is bound by residues cysteine 88 and cysteine 95.

It belongs to the PRA-CH family. In terms of assembly, homodimer. Requires Mg(2+) as cofactor. It depends on Zn(2+) as a cofactor.

The protein resides in the cytoplasm. The catalysed reaction is 1-(5-phospho-beta-D-ribosyl)-5'-AMP + H2O = 1-(5-phospho-beta-D-ribosyl)-5-[(5-phospho-beta-D-ribosylamino)methylideneamino]imidazole-4-carboxamide. It participates in amino-acid biosynthesis; L-histidine biosynthesis; L-histidine from 5-phospho-alpha-D-ribose 1-diphosphate: step 3/9. Functionally, catalyzes the hydrolysis of the adenine ring of phosphoribosyl-AMP. The protein is Phosphoribosyl-AMP cyclohydrolase of Bacillus cereus (strain B4264).